The chain runs to 1012 residues: MGVPSFYRWLIQRYPLTIQEVIEEEPLEVNGGGVTIPIDSSKPNPNGYEYDNLYLDMNGIIHPCFHPEDKPSPTTFTEVFQCMFDYIDRLFVMVRPRKLLFMAIDGVAPRAKMNQQRARRFRAAKDAAEAAAEEEQLREEFEREGKKLPPKVDSQVFDSNVITPGTEFMATLSFALRYYIHVRLNSDPGWKNIKVILSDANVPGEGEHKIMSYIRCNKNHPGYNPNTHHCLYGLDADLIMLSLATHEIHFSILREVVFFPGEEGKCFLCGQEGHRAADCEGKIKRKTGEMLDNTEADVVVKKPYEFVNIWILREYLEHDMQIPGAKKNLDRLIDDFIFICFFVGNDFLPHMPTLEIREGAIELLMSVYKNKFRSAKKYLTDSSKLNLRNVERFIKAVGMYENQIFQKRAQVQQRQSERFRRDKARDKARDNARDNAQASRQFSGKLVQLDSLDEVSDSLHSSPSRKYLRLSLDDNIGVANVETENSLKAEELDNEEDLKFKLKKLLRDKGDGFRSGNGEQDKVKLNKVGWRERYYEEKFAAKSVEEMEQIRRDVVLKYTEGLCWIMHYYYHGVCSWNWFYPYHYAPFASDLKGLEKLDIKFELGSPFKPFNQLLAVLPSASAHALPECYRSLMTNPDSPIADFYPADFEIDMNGKRYSWQGISKLPFVEEKRLLEAAAQVEKSLTNEEIRRNSALFDMLFVVASHPLGELIRSLNSRTNNLSNEERATIIEKIDPGLSDGMNGYIASCGGDSQPSCFCSTVEGMEDVLTNQVICAIYKLPEDIRGSEITHQIPRLAIPKKTISLVDLKSGGLLWHEDGDKRRAPPKVIKIKRYNPEGSISGGRLGKASHRLVLQTINAQPDYMNINSEPALCPNTVFQNERVPKKIPTFKDNGIQWISPPPSQITPKKMNSPQRQKAWKKDETPQSREKSKKLKSSLKVNPLKMKKTKSPQREFTREKKKENITPQRKLTKAQRQVKHIRMMEEAKMIKQRKKEKYLRKKAKYAQGAPPKTA.

A CCHC-type zinc finger spans residues 264–281 (GKCFLCGQEGHRAADCEG). Disordered regions lie at residues 411–439 (VQQR…AQAS), 888–976 (TFKD…QRQV), and 990–1012 (QRKK…PKTA). Residues 415–433 (QSERFRRDKARDKARDNAR) are compositionally biased toward basic and acidic residues. Polar residues predominate over residues 904 to 914 (ITPKKMNSPQR). 2 stretches are compositionally biased toward basic and acidic residues: residues 918–928 (WKKDETPQSRE) and 950–962 (PQRE…KKEN). Residues 990–1002 (QRKKEKYLRKKAK) are compositionally biased toward basic residues.

Belongs to the 5'-3' exonuclease family. XRN2/RAT1 subfamily. As to expression, expressed in roots, leaves, stems and flowers.

Its subcellular location is the nucleus. Functionally, possesses 5'-&gt;3' exoribonuclease activity. Acts as an endogenous post-transcriptional gene silencing (PTGS) suppressor. Degrades miRNA-derived loops, excised during miRNA maturation in the nucleus. Involved in pre-rRNA processing. Involved in the primary exonucleolytic shortening of the 5' external transcribed spacer (5'ETS), required for endonucleolytic processing at site P by the U3 snoRNP complex. Involved with XRN3 in the 5'-end processing of 5.8S and 25S rRNAs. Contributes with XRN3 to polyadenylation-dependent nuclear RNA surveillance. Involved in the degradation of aberrant polyadenylated pre-rRNA through 5'-end processing. The chain is 5'-3' exoribonuclease 2 from Arabidopsis thaliana (Mouse-ear cress).